Consider the following 174-residue polypeptide: N-terminal acetyltransferase B complex catalytic subunit NAA20 (174 aa).

The N-acetyltransferase domain occupies 2–151; sequence TTIRRFSCND…DGLDMRKALS (150 aa).

This sequence belongs to the acetyltransferase family. ARD1 subfamily.

The enzyme catalyses N-terminal L-methionyl-L-asparaginyl-[protein] + acetyl-CoA = N-terminal N(alpha)-acetyl-L-methionyl-L-asparaginyl-[protein] + CoA + H(+). It catalyses the reaction N-terminal L-methionyl-L-glutaminyl-[protein] + acetyl-CoA = N-terminal N(alpha)-acetyl-L-methionyl-L-glutaminyl-[protein] + CoA + H(+). The catalysed reaction is N-terminal L-methionyl-L-aspartyl-[protein] + acetyl-CoA = N-terminal N(alpha)-acetyl-L-methionyl-L-aspartyl-[protein] + CoA + H(+). It carries out the reaction N-terminal L-methionyl-L-glutamyl-[protein] + acetyl-CoA = N-terminal N(alpha)-acetyl-L-methionyl-L-glutamyl-[protein] + CoA + H(+). Functionally, catalytic subunit of the NatB N-alpha-acetyltransferase complex. Involved in plant immunity through the regulation of SNC1 stability. This is N-terminal acetyltransferase B complex catalytic subunit NAA20 from Arabidopsis thaliana (Mouse-ear cress).